A 206-amino-acid chain; its full sequence is Large ribosomal subunit protein uL4 (206 aa).

The protein belongs to the universal ribosomal protein uL4 family. Part of the 50S ribosomal subunit.

Its function is as follows. One of the primary rRNA binding proteins, this protein initially binds near the 5'-end of the 23S rRNA. It is important during the early stages of 50S assembly. It makes multiple contacts with different domains of the 23S rRNA in the assembled 50S subunit and ribosome. In terms of biological role, forms part of the polypeptide exit tunnel. In Bradyrhizobium diazoefficiens (strain JCM 10833 / BCRC 13528 / IAM 13628 / NBRC 14792 / USDA 110), this protein is Large ribosomal subunit protein uL4.